Here is a 2352-residue protein sequence, read N- to C-terminus: Ectopic P granules protein 5 (2352 aa).

Disordered regions lie at residues 1–112 (MAEL…IFPR) and 1315–1335 (KNRE…SSAK). Over residues 66 to 81 (DSLKREEASEPLKDVR) the composition is skewed to basic and acidic residues.

Belongs to the EPG5 family. In terms of tissue distribution, expressed in pharyngeal and body wall muscles and intestine cells.

Its subcellular location is the cytoplasm. It localises to the cytoplasmic vesicle. The protein localises to the phagosome membrane. Its function is as follows. Involved in the maturation of autophagosomes into autolysosomes during starvation-induced autotrophy. Specifically, involved in the clearance of apoptotic cells by promoting the delivery of engulfed apoptotic cells to the lysosome. The polypeptide is Ectopic P granules protein 5 (Caenorhabditis elegans).